Reading from the N-terminus, the 154-residue chain is uncharacterized protein (154 aa).

This is an uncharacterized protein from Bacillus subtilis (strain 168).